The primary structure comprises 373 residues: tRNA-specific 2-thiouridylase MnmA (373 aa).

Residues 12 to 19 (GMSGGVDS) and methionine 38 contribute to the ATP site. An interaction with target base in tRNA region spans residues 98–100 (NPD). Cysteine 103 serves as the catalytic Nucleophile. Cysteine 103 and cysteine 200 form a disulfide bridge. Glycine 127 provides a ligand contact to ATP. Positions 150 to 152 (KDQ) are interaction with tRNA. Residue cysteine 200 is the Cysteine persulfide intermediate of the active site. The interaction with tRNA stretch occupies residues 312–313 (RY).

It belongs to the MnmA/TRMU family.

It localises to the cytoplasm. The catalysed reaction is S-sulfanyl-L-cysteinyl-[protein] + uridine(34) in tRNA + AH2 + ATP = 2-thiouridine(34) in tRNA + L-cysteinyl-[protein] + A + AMP + diphosphate + H(+). Catalyzes the 2-thiolation of uridine at the wobble position (U34) of tRNA, leading to the formation of s(2)U34. This chain is tRNA-specific 2-thiouridylase MnmA, found in Streptococcus pyogenes serotype M12 (strain MGAS2096).